The sequence spans 242 residues: RNA transcription, translation and transport factor protein (242 aa).

It belongs to the RTRAF family. Homodimer. Component of a tRNA-splicing ligase complex.

The protein resides in the nucleus. The protein localises to the cytoplasm. It is found in the cytosol. Its subcellular location is the perinuclear region. It localises to the cytoskeleton. The protein resides in the microtubule organizing center. The protein localises to the centrosome. Its function is as follows. RNA-binding protein involved in modulation of mRNA transcription by Polymerase II. Component of the tRNA-splicing ligase complex. The protein is RNA transcription, translation and transport factor protein of Danio rerio (Zebrafish).